Reading from the N-terminus, the 90-residue chain is Large ribosomal subunit protein bL27 (90 aa).

Residues 1-20 (MAHKKAGGSSRNGRDSAGKR) are disordered.

The protein belongs to the bacterial ribosomal protein bL27 family.

The protein is Large ribosomal subunit protein bL27 of Nitrobacter hamburgensis (strain DSM 10229 / NCIMB 13809 / X14).